A 74-amino-acid polypeptide reads, in one-letter code: ATP synthase subunit 9, mitochondrial (74 aa).

A run of 2 helical transmembrane segments spans residues 8 to 28 and 50 to 70; these read MGAG…GNVF and ILGF…AFLI.

It belongs to the ATPase C chain family. In terms of assembly, F-type ATPases have 2 components, CF(1) - the catalytic core - and CF(0) - the membrane proton channel. CF(1) has five subunits: alpha(3), beta(3), gamma(1), delta(1), epsilon(1). CF(0) has three main subunits: a, b and c.

The protein localises to the mitochondrion membrane. In terms of biological role, this protein is one of the chains of the nonenzymatic membrane component (F0) of mitochondrial ATPase. This Solanum tuberosum (Potato) protein is ATP synthase subunit 9, mitochondrial (ATP9).